A 592-amino-acid polypeptide reads, in one-letter code: Aspartate--tRNA(Asp/Asn) ligase (592 aa).

Position 172 (Glu-172) interacts with L-aspartate. Residues 196 to 199 (QLFK) form an aspartate region. Residue Arg-218 coordinates L-aspartate. Residues 218-220 (RDE) and Gln-227 contribute to the ATP site. His-442 is an L-aspartate binding site. Glu-476 is an ATP binding site. Arg-483 contacts L-aspartate. Residue 528 to 531 (GWDR) participates in ATP binding. The tract at residues 553–592 (SGTDPLTGAPTPITPEQRKEAGIDADPYAAAGRPPGRQSA) is disordered.

This sequence belongs to the class-II aminoacyl-tRNA synthetase family. Type 1 subfamily. As to quaternary structure, homodimer.

It localises to the cytoplasm. It carries out the reaction tRNA(Asx) + L-aspartate + ATP = L-aspartyl-tRNA(Asx) + AMP + diphosphate. Aspartyl-tRNA synthetase with relaxed tRNA specificity since it is able to aspartylate not only its cognate tRNA(Asp) but also tRNA(Asn). Reaction proceeds in two steps: L-aspartate is first activated by ATP to form Asp-AMP and then transferred to the acceptor end of tRNA(Asp/Asn). This Acidothermus cellulolyticus (strain ATCC 43068 / DSM 8971 / 11B) protein is Aspartate--tRNA(Asp/Asn) ligase.